The primary structure comprises 301 residues: MQKPQYIDRITKKKVIEPIFYEKTMLFLYNSKLGKKLSVFLSTHPIFSRIYGWLQRCSWTRRQIRPFMNRYKISEKELTKPVADFTSFNDFFTRKLKPEARPIVGGKEVFITPVDGRYLVYPNVSEFDKFIVKSKAFSLPKLLGDHELTKLYAHGSIVFARLAPFDYHRFHFPCDCLPQKTRCVNGALFSVHPLAVKDNFILFCENKRTVTVLETEQFGNVLYLEVGAMNVGSIVQTFSPNQTYAKGDEKGFFAFGGSTVILLFLPNAIRFDNDLLKNSRMGFETRCLMGQSLGRSQREEI.

Active-site charge relay system; for autoendoproteolytic cleavage activity residues include Asp-115, His-171, and Ser-258. The active-site Schiff-base intermediate with substrate; via pyruvic acid; for decarboxylase activity is the Ser-258. Residue Ser-258 is modified to Pyruvic acid (Ser); by autocatalysis.

It belongs to the phosphatidylserine decarboxylase family. PSD-B subfamily. Prokaryotic type II sub-subfamily. Heterodimer of a large membrane-associated beta subunit and a small pyruvoyl-containing alpha subunit. Pyruvate is required as a cofactor. Post-translationally, is synthesized initially as an inactive proenzyme. Formation of the active enzyme involves a self-maturation process in which the active site pyruvoyl group is generated from an internal serine residue via an autocatalytic post-translational modification. Two non-identical subunits are generated from the proenzyme in this reaction, and the pyruvate is formed at the N-terminus of the alpha chain, which is derived from the carboxyl end of the proenzyme. The autoendoproteolytic cleavage occurs by a canonical serine protease mechanism, in which the side chain hydroxyl group of the serine supplies its oxygen atom to form the C-terminus of the beta chain, while the remainder of the serine residue undergoes an oxidative deamination to produce ammonia and the pyruvoyl prosthetic group on the alpha chain. During this reaction, the Ser that is part of the protease active site of the proenzyme becomes the pyruvoyl prosthetic group, which constitutes an essential element of the active site of the mature decarboxylase.

It localises to the cell membrane. The catalysed reaction is a 1,2-diacyl-sn-glycero-3-phospho-L-serine + H(+) = a 1,2-diacyl-sn-glycero-3-phosphoethanolamine + CO2. The protein operates within phospholipid metabolism; phosphatidylethanolamine biosynthesis; phosphatidylethanolamine from CDP-diacylglycerol: step 2/2. In terms of biological role, catalyzes the formation of phosphatidylethanolamine (PtdEtn) from phosphatidylserine (PtdSer). The chain is Phosphatidylserine decarboxylase proenzyme from Chlamydia pneumoniae (Chlamydophila pneumoniae).